Consider the following 235-residue polypeptide: UPF0714 protein YmaC (235 aa).

A helical transmembrane segment spans residues 5–24; that stretch reads LLNVILVLAIVLFLRYVHYS.

The protein belongs to the UPF0714 family.

The protein localises to the cell membrane. The sequence is that of UPF0714 protein YmaC (ymaC) from Bacillus subtilis (strain 168).